Here is a 208-residue protein sequence, read N- to C-terminus: PITH domain-containing protein ZK353.9 (208 aa).

In terms of domain architecture, PITH spans 17 to 189 (EVPGDDVYRY…RIAIATYESR (173 aa)).

This sequence belongs to the PITHD1 family.

The polypeptide is PITH domain-containing protein ZK353.9 (Caenorhabditis elegans).